A 723-amino-acid chain; its full sequence is MAEYTRLHNALALIRLRNPPVNAISTALLRDIKEGLQKAVIDHTIKAIVICGAEGKFSAGADIHGFSAPRTFGFTLGHVVDEIQRNEKPVVAAIQGMAFGGGLELALGCHYRIAHSEAQVGLPEVTLGLLPGARGTQLLPRLIGVPAALDLITSGRHILADEALKLGILDKVVNSDPVEEAIRFAQRVSDQPLESRRLCNKPIQSLPNMDTIFSEALLKMRRQHPGCLAQEACVRAVQAAVQYPYEVGVKKEEELFLYLFQSGQARALQYAFLAERKANKWSTPSGASWKTASARPVSSVGVVGLGTMGRGIVISFARARIPVIAVDSDKNQLATANKMITSVLEKEASKMQQSGHPWSGPKPRLTSSMKELGGVDLVIEAVFEEMSLKKQVFAELSAICKPEAFLCTNTSALDVDEIASSTDRPHLVIGTHFFSPAHVMKLLEVIPSQYSSPTTIATVMNLSKKIKKIGVVVGNCFGFVGNRMLNPYYNQAYFLLEEGSKPEEVDQVLEEFGFKMGPFRVSDLAGLDVGWKSRKGQGLTGPTLPPGTPARKRGNRRYCPIPDVLCELGRFGQKTGKGWYQYDKPLGRIHKADPWLSKFLSQYRETHHIEPRTISQDEILERCLYSLINEAFRILGEGIAASPEHIDVVYLHGYGWPRHKGGPMFYASTVGLPTVLEKLQKYYRQNPDIPQLEPSDYLKKLASQGNPPQKEWQSLAGSPSSKL.

Residues 1–282 are enoyl-CoA hydratase / isomerase; the sequence is MAEYTRLHNA…LAERKANKWS (282 aa). An N6-succinyllysine modification is found at Lys38. Gly101 contributes to the substrate binding site. At Lys165 the chain carries N6-acetyllysine; alternate. Lys165 is modified (N6-succinyllysine; alternate). An N6-acetyllysine modification is found at Lys171. Position 219 is an N6-acetyllysine; alternate (Lys219). An N6-succinyllysine; alternate modification is found at Lys219. Lys250 is modified (N6-acetyllysine). 2 positions are modified to N6-succinyllysine: Lys280 and Lys290. A 3-hydroxyacyl-CoA dehydrogenase region spans residues 283–572; the sequence is TPSGASWKTA…DVLCELGRFG (290 aa). 3 positions are modified to N6-acetyllysine: Lys346, Lys350, and Lys464. Lys532 is modified (N6-succinyllysine). Thr548 is modified (phosphothreonine). Lys577 bears the N6-succinyllysine mark. Lys584, Lys591, and Lys710 each carry N6-acetyllysine; alternate. Residues Lys584, Lys591, and Lys710 each carry the N6-succinyllysine; alternate modification. The interval 699-723 is disordered; sequence KKLASQGNPPQKEWQSLAGSPSSKL. Positions 703–723 are enriched in polar residues; sequence SQGNPPQKEWQSLAGSPSSKL. Ser718 carries the post-translational modification Phosphoserine. Residues 721-723 carry the Microbody targeting signal motif; sequence SKL. Lys722 bears the N6-succinyllysine mark.

In the N-terminal section; belongs to the enoyl-CoA hydratase/isomerase family. This sequence in the C-terminal section; belongs to the 3-hydroxyacyl-CoA dehydrogenase family. In terms of assembly, monomer. Post-translationally, acetylated, leading to enhanced enzyme activity. Acetylation is enhanced by up to 80% after treatment either with trichostin A (TSA) or with nicotinamide (NAM) with highest increase on Lys-346. Acetylation and enzyme activity increased by about 1.5% on addition of fatty acids.

It localises to the peroxisome. The enzyme catalyses a (3S)-3-hydroxyacyl-CoA = a (2E)-enoyl-CoA + H2O. It carries out the reaction a 4-saturated-(3S)-3-hydroxyacyl-CoA = a (3E)-enoyl-CoA + H2O. It catalyses the reaction a (3Z)-enoyl-CoA = a 4-saturated (2E)-enoyl-CoA. The catalysed reaction is a (3E)-enoyl-CoA = a 4-saturated (2E)-enoyl-CoA. The enzyme catalyses a (3S)-3-hydroxyacyl-CoA + NAD(+) = a 3-oxoacyl-CoA + NADH + H(+). It carries out the reaction (2S,3S)-3-hydroxy-2-methylbutanoyl-CoA = (2E)-2-methylbut-2-enoyl-CoA + H2O. It catalyses the reaction (3S)-hydroxyhexadecanoyl-CoA + NAD(+) = 3-oxohexadecanoyl-CoA + NADH + H(+). The catalysed reaction is (3S)-hydroxyhexadecanoyl-CoA = (2E)-hexadecenoyl-CoA + H2O. The enzyme catalyses (2E)-hexadecenedioyl-CoA + H2O = (3S)-hydroxyhexadecanedioyl-CoA. It carries out the reaction (3S)-hydroxyhexadecanedioyl-CoA + NAD(+) = 3-oxohexadecanedioyl-CoA + NADH + H(+). It catalyses the reaction (3E,5Z)-tetradecadienoyl-CoA = (2E,5Z)-tetradecadienoyl-CoA. The catalysed reaction is (3E,5Z)-octadienoyl-CoA = (2E,5Z)-octadienoyl-CoA. The enzyme catalyses (3S)-hydroxydecanoyl-CoA + NAD(+) = 3-oxodecanoyl-CoA + NADH + H(+). It carries out the reaction (3E)-decenoyl-CoA = (2E)-decenoyl-CoA. It catalyses the reaction (3Z)-hexenoyl-CoA = (2E)-hexenoyl-CoA. The catalysed reaction is (3E)-hexenoyl-CoA = (2E)-hexenoyl-CoA. The enzyme catalyses (3S)-hydroxydecanoyl-CoA = (2E)-decenoyl-CoA + H2O. It carries out the reaction (3S)-hydroxyhexanoyl-CoA = (2E)-hexenoyl-CoA + H2O. Its pathway is lipid metabolism; fatty acid beta-oxidation. Its activity is regulated as follows. Enzyme activity enhanced by acetylation. Peroxisomal trifunctional enzyme possessing 2-enoyl-CoA hydratase, 3-hydroxyacyl-CoA dehydrogenase, and delta 3, delta 2-enoyl-CoA isomerase activities. Catalyzes two of the four reactions of the long chain fatty acids peroxisomal beta-oxidation pathway. Can also use branched-chain fatty acids such as 2-methyl-2E-butenoyl-CoA as a substrate, which is hydrated into (2S,3S)-3-hydroxy-2-methylbutanoyl-CoA. Optimal isomerase for 2,5 double bonds into 3,5 form isomerization in a range of enoyl-CoA species. Also able to isomerize both 3-cis and 3-trans double bonds into the 2-trans form in a range of enoyl-CoA species. Regulates the amount of medium-chain dicarboxylic fatty acids which are essential regulators of all fatty acid oxidation pathways. Also involved in the degradation of long-chain dicarboxylic acids through peroxisomal beta-oxidation. This is Peroxisomal bifunctional enzyme (EHHADH) from Pongo abelii (Sumatran orangutan).